We begin with the raw amino-acid sequence, 167 residues long: Regulatory protein RecX (167 aa).

A disordered region spans residues 19–49 (ESELRRKLASQPFSAKGHWGKQTGRSDNEPV).

This sequence belongs to the RecX family.

It is found in the cytoplasm. Its function is as follows. Modulates RecA activity. In Yersinia enterocolitica serotype O:8 / biotype 1B (strain NCTC 13174 / 8081), this protein is Regulatory protein RecX.